The primary structure comprises 464 residues: Protein FAM90A10 (464 aa).

Disordered stretches follow at residues 1 to 42, 69 to 373, and 415 to 437; these read MMAR…DPRL, VPAT…LPTA, and HSPEKPGAFLAQSPHVSEKSEAP. Composition is skewed to basic and acidic residues over residues 74–89 and 97–114; these read GKKEGKENLKPWKPRG and NKDKGEKEERPRQQDPQR. The span at 180 to 197 shows a compositional bias: low complexity; sequence LASLSPLRKASLSSSSSL.

This sequence belongs to the FAM90 family.

This chain is Protein FAM90A10 (FAM90A10), found in Homo sapiens (Human).